A 353-amino-acid polypeptide reads, in one-letter code: GTPase Obg (353 aa).

An Obg domain is found at 1-159; sequence MKFLDEAKVY…RWIWLRLKLI (159 aa). An OBG-type G domain is found at 160-327; sequence ADAGLVGLPN…VLRALVAVIG (168 aa). Residues 166–173, 191–195, 212–215, 279–282, and 308–310 contribute to the GTP site; these read GLPNAGKS, FTTLH, DIPG, NKID, and SGV. Serine 173 and threonine 193 together coordinate Mg(2+).

The protein belongs to the TRAFAC class OBG-HflX-like GTPase superfamily. OBG GTPase family. In terms of assembly, monomer. It depends on Mg(2+) as a cofactor.

Its subcellular location is the cytoplasm. Functionally, an essential GTPase which binds GTP, GDP and possibly (p)ppGpp with moderate affinity, with high nucleotide exchange rates and a fairly low GTP hydrolysis rate. Plays a role in control of the cell cycle, stress response, ribosome biogenesis and in those bacteria that undergo differentiation, in morphogenesis control. This is GTPase Obg from Rhodopseudomonas palustris (strain TIE-1).